We begin with the raw amino-acid sequence, 258 residues long: Thymidylate synthase (258 aa).

DUMP is bound at residue arginine 21. Histidine 51 provides a ligand contact to (6R)-5,10-methylene-5,6,7,8-tetrahydrofolate. 121–122 (RR) contributes to the dUMP binding site. The active-site Nucleophile is cysteine 141. Residues 161 to 164 (RSAD), asparagine 172, and 202 to 204 (HLY) each bind dUMP. Aspartate 164 serves as a coordination point for (6R)-5,10-methylene-5,6,7,8-tetrahydrofolate. Alanine 257 serves as a coordination point for (6R)-5,10-methylene-5,6,7,8-tetrahydrofolate.

The protein belongs to the thymidylate synthase family. Bacterial-type ThyA subfamily. In terms of assembly, homodimer.

The protein resides in the cytoplasm. The enzyme catalyses dUMP + (6R)-5,10-methylene-5,6,7,8-tetrahydrofolate = 7,8-dihydrofolate + dTMP. Its pathway is pyrimidine metabolism; dTTP biosynthesis. In terms of biological role, catalyzes the reductive methylation of 2'-deoxyuridine-5'-monophosphate (dUMP) to 2'-deoxythymidine-5'-monophosphate (dTMP) while utilizing 5,10-methylenetetrahydrofolate (mTHF) as the methyl donor and reductant in the reaction, yielding dihydrofolate (DHF) as a by-product. This enzymatic reaction provides an intracellular de novo source of dTMP, an essential precursor for DNA biosynthesis. The protein is Thymidylate synthase of Dichelobacter nodosus (strain VCS1703A).